The primary structure comprises 246 residues: Mediator of RNA polymerase II transcription subunit 6 (246 aa).

2 disordered regions span residues 165-186 (MKKKEEEKKEEDERKLEERSTN) and 207-246 (EALEKLDVKEEENPKPEEAPSASAVGEPKFAEPAARATTK). 2 stretches are compositionally biased toward basic and acidic residues: residues 166–184 (KKKEEEKKEEDERKLEERS) and 208–224 (ALEKLDVKEEENPKPEE).

Belongs to the Mediator complex subunit 6 family. Component of the Mediator complex. Interacts with let-19/mdt-13. Interacts with RNA polymerase II. Interacts with mdt-28.

It is found in the nucleus. Its function is as follows. Component of the Mediator complex, a coactivator involved in the regulated transcription of nearly all RNA polymerase II-dependent genes. Mediator functions as a bridge to convey information from gene-specific regulatory proteins to the basal RNA polymerase II transcription machinery. Mediator is recruited to promoters by direct interactions with regulatory proteins and serves as a scaffold for the assembly of a functional preinitiation complex with RNA polymerase II and the general transcription factors. The protein is Mediator of RNA polymerase II transcription subunit 6 (mdt-6) of Caenorhabditis briggsae.